The chain runs to 1165 residues: Autophagy-related protein 11 (1165 aa).

Coiled-coil stretches lie at residues 239-304 (NKLN…YKNM) and 670-853 (DNIR…KQKK).

Belongs to the ATG11 family. Homodimer and potential homooligomers.

The protein resides in the preautophagosomal structure membrane. Plays an essential role in both non-selective and selective autophagy such as mitophagy. Recruits mitochondria for their selective degradation via autophagy (mitophagy) during starvation, through its interaction with ATG32. Works as scaffold proteins that recruit ATG proteins to the pre-autophagosome (PAS), the site of vesicle/autophagosome formation. Required for ATG9 anterograde transport from the mitochondria to the PAS. The sequence is that of Autophagy-related protein 11 from Candida albicans (strain SC5314 / ATCC MYA-2876) (Yeast).